Reading from the N-terminus, the 59-residue chain is Temperature acclimation protein A (59 aa).

One can recognise a CSD domain in the interval 1 to 55 (FNDEKGFGFITPESGPDLFVHFRAIQGNGFKSLKEGQKVTFIAVQGQKGMQADKV).

The protein resides in the cytoplasm. In terms of biological role, affects cell viability at low temperatures. The sequence is that of Temperature acclimation protein A (tapA) from Pseudomonas fragi.